Here is a 161-residue protein sequence, read N- to C-terminus: Phosphopantetheine adenylyltransferase (161 aa).

Position 9 (T9) interacts with substrate. ATP contacts are provided by residues 9–10 and H17; that span reads TF. The substrate site is built by K41, L73, and R87. Residues 88–90, E98, and 123–129 contribute to the ATP site; these read GLR and YQFISGT.

It belongs to the bacterial CoaD family. As to quaternary structure, homohexamer. Requires Mg(2+) as cofactor.

It localises to the cytoplasm. The enzyme catalyses (R)-4'-phosphopantetheine + ATP + H(+) = 3'-dephospho-CoA + diphosphate. The protein operates within cofactor biosynthesis; coenzyme A biosynthesis; CoA from (R)-pantothenate: step 4/5. Its function is as follows. Reversibly transfers an adenylyl group from ATP to 4'-phosphopantetheine, yielding dephospho-CoA (dPCoA) and pyrophosphate. This Janthinobacterium sp. (strain Marseille) (Minibacterium massiliensis) protein is Phosphopantetheine adenylyltransferase.